The sequence spans 140 residues: Ribosome-binding factor A (140 aa).

Positions 116–140 (RERQERGEIPPGSDDAQNCHDDEPS) are disordered.

Belongs to the RbfA family. In terms of assembly, monomer. Binds 30S ribosomal subunits, but not 50S ribosomal subunits or 70S ribosomes.

The protein localises to the cytoplasm. In terms of biological role, one of several proteins that assist in the late maturation steps of the functional core of the 30S ribosomal subunit. Associates with free 30S ribosomal subunits (but not with 30S subunits that are part of 70S ribosomes or polysomes). Required for efficient processing of 16S rRNA. May interact with the 5'-terminal helix region of 16S rRNA. This Synechococcus sp. (strain WH7803) protein is Ribosome-binding factor A.